Consider the following 549-residue polypeptide: Oxygen-dependent choline dehydrogenase (549 aa).

Asp4 to Glu33 provides a ligand contact to FAD. The active-site Proton acceptor is His465.

This sequence belongs to the GMC oxidoreductase family. FAD serves as cofactor.

It catalyses the reaction choline + A = betaine aldehyde + AH2. The catalysed reaction is betaine aldehyde + NAD(+) + H2O = glycine betaine + NADH + 2 H(+). It functions in the pathway amine and polyamine biosynthesis; betaine biosynthesis via choline pathway; betaine aldehyde from choline (cytochrome c reductase route): step 1/1. Involved in the biosynthesis of the osmoprotectant glycine betaine. Catalyzes the oxidation of choline to betaine aldehyde and betaine aldehyde to glycine betaine at the same rate. This chain is Oxygen-dependent choline dehydrogenase, found in Rhizobium etli (strain CIAT 652).